The primary structure comprises 161 residues: Ribonuclease P protein component (161 aa).

This sequence belongs to the RnpA family. In terms of assembly, consists of a catalytic RNA component (M1 or rnpB) and a protein subunit.

It carries out the reaction Endonucleolytic cleavage of RNA, removing 5'-extranucleotides from tRNA precursor.. Functionally, RNaseP catalyzes the removal of the 5'-leader sequence from pre-tRNA to produce the mature 5'-terminus. It can also cleave other RNA substrates such as 4.5S RNA. The protein component plays an auxiliary but essential role in vivo by binding to the 5'-leader sequence and broadening the substrate specificity of the ribozyme. The protein is Ribonuclease P protein component of Helicobacter pylori (strain Shi470).